We begin with the raw amino-acid sequence, 337 residues long: Prenyltransferase terC (337 aa).

2 residues coordinate Mg(2+): aspartate 111 and aspartate 115.

This sequence belongs to the FPP/GGPP synthase family. Mg(2+) serves as cofactor.

It functions in the pathway secondary metabolite biosynthesis. Functionally, prenyltransferase; part of the gene cluster that mediates the biosynthesis of terpendoles, indole-diterpene (IDT) mycotoxins including terpendole I, terpendole K, terpendole C, as well as the kinesin Eg5 inhibitor terpendole E. Terpendoles biosynthesis begins with the synthesis of geranylgeranyl diphosphate (GGPP) by a yet unidentified GGPP synthase. Condensation of indole-3-glycerol phosphate with GGPP by the prenyltransferase terC then forms 3-geranylgeranylindole (3-GGI), followed by epoxidation and cyclization of this intermediate (by the FAD-dependent monooxygeanse terM and the terpene cyclase terB) to form paspaline. The cytochrome monooxygenase terQ then hydroxylates paspalline at C-11 to yield terpendole E. The cytochrome monooxygenase terP converts terpendole E to 13-desoxyterpendole I, and terQ converts 13-desoxyterpendole I into terpendole I. TerF and terK are required for conversion of terpendole I to terpendole C which is further converted to terpendole K. In Tolypocladium album (Soil fungus), this protein is Prenyltransferase terC.